Reading from the N-terminus, the 351-residue chain is Ferredoxin--NADP reductase (351 aa).

FAD-binding residues include aspartate 44, glutamine 52, tyrosine 57, valine 97, phenylalanine 132, aspartate 296, and serine 337.

It belongs to the ferredoxin--NADP reductase type 2 family. Homodimer. The cofactor is FAD.

The enzyme catalyses 2 reduced [2Fe-2S]-[ferredoxin] + NADP(+) + H(+) = 2 oxidized [2Fe-2S]-[ferredoxin] + NADPH. In Paraburkholderia phymatum (strain DSM 17167 / CIP 108236 / LMG 21445 / STM815) (Burkholderia phymatum), this protein is Ferredoxin--NADP reductase.